The chain runs to 668 residues: Metal reductase (668 aa).

FMN contacts are provided by residues 23-25, Gly57, Gln98, Arg216, Arg290, and 312-313; these read PMH and AR. Residues Cys336 and Cys339 each coordinate [4Fe-4S] cluster. Position 341 (Gln341) interacts with FAD. 2 residues coordinate [4Fe-4S] cluster: Cys343 and Cys355. The FAD site is built by Ala386, Glu405, Gln413, Arg423, and Ala450.

This sequence in the N-terminal section; belongs to the NADH:flavin oxidoreductase/NADH oxidase family. In terms of assembly, homotetramer. The cofactor is FMN. FAD serves as cofactor. Requires [4Fe-4S] cluster as cofactor.

The protein localises to the cytoplasm. In terms of biological role, metal reductase able to reduce Fe(III)-chelates to Fe(II)-chelates, as well as soluble Cr(VI) and U(VI), using NADH as electron donor. Cannot use NADPH as an electron donor. Is unable to reduce riboflavin and FMN with NADH as electron donor. May have an in vivo role in metal reduction in D.reducens, which is an organism capable of reducing contaminant heavy metals and radionuclides. This Desulforamulus reducens (strain ATCC BAA-1160 / DSM 100696 / MI-1) (Desulfotomaculum reducens) protein is Metal reductase.